A 189-amino-acid polypeptide reads, in one-letter code: UPF0398 protein lp_1753 (189 aa).

The protein belongs to the UPF0398 family.

The sequence is that of UPF0398 protein lp_1753 from Lactiplantibacillus plantarum (strain ATCC BAA-793 / NCIMB 8826 / WCFS1) (Lactobacillus plantarum).